We begin with the raw amino-acid sequence, 412 residues long: G-protein coupled receptor homolog UL33 (412 aa).

Residues 1-35 (MDTIIHNTTNRSTDTPHVNITCNITEPLSAIRTTE) lie on the Virion surface side of the membrane. N-linked (GlcNAc...) asparagine; by host glycosylation is found at asparagine 7, asparagine 19, and asparagine 23. The helical transmembrane segment at 36–56 (AVINTFIIFVGGPLNAIVLIT) threads the bilayer. At 57 to 80 (QLLTNRVLGYSTPTIYMTNLYSTN) the chain is on the intravirion side. Residues 81–101 (FLTLTVLPFIVLSNQWLLPAS) traverse the membrane as a helical segment. The Virion surface segment spans residues 102-106 (VASCK). A disulfide bond links cysteine 105 and cysteine 188. The helical transmembrane segment at 107–127 (FLSVIYYSSCTVGFATVALIA) threads the bilayer. The Intravirion portion of the chain corresponds to 128-147 (ADRYRVLHKRTYARQSYRST). Residues 148–168 (YIILLLTWFAGLIFSMPAAVY) form a helical membrane-spanning segment. At 169-206 (TTVVIHNGTNGQSSNGHATCVLYFIADEVYTVLLSWKV) the chain is on the virion surface side. Residues 207–227 (LLTLVWGAAPVIMMTWFYAFF) traverse the membrane as a helical segment. Over 228 to 244 (YSTVQRASQKQRSRTLT) the chain is Intravirion. A helical membrane pass occupies residues 245-265 (FVSVLLISFVALQTPYVSIMI). Topologically, residues 266–292 (FNSYATAAWPMDCEHLTLRRTIGTLSR) are virion surface. A helical membrane pass occupies residues 293-313 (LVPHLHCLINPILYALLGHDF). Residues 314 to 412 (LQRMRQCFRG…SQSHHNLSGV (99 aa)) are Intravirion-facing. Residues 377–412 (NFPSGTWKGGQKTASNDTSTKIPHRLSQSHHNLSGV) are disordered. A compositionally biased stretch (polar residues) spans 388–397 (KTASNDTSTK).

It belongs to the G-protein coupled receptor 1 family. As to quaternary structure, heterodimerizes with US28.

The protein resides in the virion. It localises to the host cell membrane. Its subcellular location is the host cytoplasm. Its function is as follows. G-protein-coupled receptor (vGPCR) that constitutively activates multiple oncogenic signaling pathways including STAT3, AP-1, phospholipase C, NF-kappa-B or cAMP-responsive element (CRE) pathways. Plays an important role in viral reactivation from latency through activation of host CREB1, facilitating its recruitment to the viral major immediate early (MIE) genes. In turn, expression of the MIE-driven genes such as UL123 are de-repressed. Also facilitates virus dissemination via the extracellular and cell-to-cell route. In Human cytomegalovirus (strain Merlin) (HHV-5), this protein is G-protein coupled receptor homolog UL33 (UL33).